A 336-amino-acid chain; its full sequence is Fructose-1,6-bisphosphatase class 1 (336 aa).

Mg(2+) is bound by residues Glu90, Asp112, Leu114, and Asp115. Residues 115 to 118 (DGSS), Asn211, and Lys277 each bind substrate. Residue Glu283 participates in Mg(2+) binding.

It belongs to the FBPase class 1 family. Homotetramer. It depends on Mg(2+) as a cofactor.

It localises to the cytoplasm. It carries out the reaction beta-D-fructose 1,6-bisphosphate + H2O = beta-D-fructose 6-phosphate + phosphate. It functions in the pathway carbohydrate biosynthesis; gluconeogenesis. This Pseudomonas savastanoi pv. phaseolicola (strain 1448A / Race 6) (Pseudomonas syringae pv. phaseolicola (strain 1448A / Race 6)) protein is Fructose-1,6-bisphosphatase class 1.